Here is a 313-residue protein sequence, read N- to C-terminus: Porphobilinogen deaminase (313 aa).

At Cys242 the chain carries S-(dipyrrolylmethanemethyl)cysteine.

It belongs to the HMBS family. In terms of assembly, monomer. Requires dipyrromethane as cofactor.

The catalysed reaction is 4 porphobilinogen + H2O = hydroxymethylbilane + 4 NH4(+). It participates in porphyrin-containing compound metabolism; protoporphyrin-IX biosynthesis; coproporphyrinogen-III from 5-aminolevulinate: step 2/4. In terms of biological role, tetrapolymerization of the monopyrrole PBG into the hydroxymethylbilane pre-uroporphyrinogen in several discrete steps. The sequence is that of Porphobilinogen deaminase from Pseudomonas fluorescens (strain SBW25).